The primary structure comprises 87 residues: Apolipoprotein C-I (87 aa).

The N-terminal stretch at 1 to 26 (MRLILSLPVLAVVLAMVLEGPAPAQA) is a signal peptide.

It belongs to the apolipoprotein C1 family.

The protein resides in the secreted. In terms of biological role, inhibitor of lipoprotein binding to the low density lipoprotein (LDL) receptor, LDL receptor-related protein, and very low density lipoprotein (VLDL) receptor. Associates with high density lipoproteins (HDL) and the triacylglycerol-rich lipoproteins in the plasma and makes up about 10% of the protein of the VLDL and 2% of that of HDL. Appears to interfere directly with fatty acid uptake and is also the major plasma inhibitor of cholesteryl ester transfer protein (CETP). Binds free fatty acids and reduces their intracellular esterification. Modulates the interaction of APOE with beta-migrating VLDL and inhibits binding of beta-VLDL to the LDL receptor-related protein. In Pteropus vampyrus (Large flying fox), this protein is Apolipoprotein C-I (APOC1).